The chain runs to 145 residues: Angiogenin-3 (145 aa).

Residues 1–24 (MVMSPGSLLLVFLLSLDVIPPTLA) form the signal peptide. The residue at position 25 (Gln-25) is a Pyrrolidone carboxylic acid. The active-site Proton acceptor is the His-37. Cystine bridges form between Cys-50-Cys-104, Cys-63-Cys-115, and Cys-81-Cys-130. The short motif at 55–59 (KKRKL) is the Nucleolar localization signal element. Residues Glu-65 and His-106 each coordinate Zn(2+). Catalysis depends on His-137, which acts as the Proton donor.

The protein belongs to the pancreatic ribonuclease family.

Its subcellular location is the cytoplasmic vesicle. It is found in the secretory vesicle lumen. The protein localises to the secreted. The protein resides in the nucleus. It localises to the nucleolus. Divalent metal ions, such as Cu2+ and Zn2+, may inhibit the ribonucleolytic activity. In terms of biological role, has low ribonuclease activity (in vitro). The chain is Angiogenin-3 (Ang3) from Mus musculus (Mouse).